A 98-amino-acid polypeptide reads, in one-letter code: Putative protein adenylyltransferase MJ1217 (98 aa).

The GSX(10)DXD motif signature appears at 31–45; the sequence is GSYAREEQKETSDID. Asp-43, Asp-45, and Asp-75 together coordinate Mg(2+).

Belongs to the MntA antitoxin family. Probably forms a complex with cognate toxin MJ1216. Mg(2+) serves as cofactor.

It carries out the reaction L-tyrosyl-[protein] + ATP = O-(5'-adenylyl)-L-tyrosyl-[protein] + diphosphate. The enzyme catalyses O-(5'-adenylyl)-L-tyrosyl-[protein] + ATP = O-[5'-(adenylyl-(5'-&gt;3')-adenylyl)]-L-tyrosyl-[protein] + diphosphate. In terms of biological role, probable antitoxin component of a putative type VII toxin-antitoxin (TA) system. Neutralizes cognate toxic MJ1216 by di-AMPylation. This chain is Putative protein adenylyltransferase MJ1217, found in Methanocaldococcus jannaschii (strain ATCC 43067 / DSM 2661 / JAL-1 / JCM 10045 / NBRC 100440) (Methanococcus jannaschii).